Reading from the N-terminus, the 418-residue chain is Protein YdhQ (418 aa).

The chain is Protein YdhQ (ydhQ) from Escherichia coli (strain K12).